Reading from the N-terminus, the 736-residue chain is Epithelial splicing regulatory protein 2 (736 aa).

3 RRM domains span residues 224 to 301 (TVIR…KATG), 325 to 405 (MIIR…RSTA), and 659 to 736 (ALVR…ACCE).

It belongs to the ESRP family.

It localises to the nucleus. Functionally, mRNA splicing factor that regulates the formation of epithelial cell-specific isoforms. Specifically regulates the expression of FGFR2-IIIb, an epithelial cell-specific isoform of fgfr2. Acts by directly binding specific sequences in mRNAs. Binds the GU-rich sequence motifs in the ISE/ISS-3, a cis-element regulatory region present in the mRNA of fgfr2. The protein is Epithelial splicing regulatory protein 2 (esrp2) of Danio rerio (Zebrafish).